The chain runs to 263 residues: Cell division protein DivIB (263 aa).

Topologically, residues 1 to 32 are cytoplasmic; it reads MNPGQDREKIVNIEERIPKIKEQRKQKANRRL. A helical transmembrane segment spans residues 33 to 53; it reads ISFIMLFFIMVLIIVYLQTPI. An alpha region spans residues 51–123; it reads TPISKVSTIS…NKINIAIEEY (73 aa). The POTRA domain occupies 54–123; sequence SKVSTISVTG…NKINIAIEEY (70 aa). Residues 54–263 are Extracellular-facing; sequence SKVSTISVTG…DKAAKKEDEN (210 aa). Residues 124–251 are beta; sequence KAIAYLEKDD…EVATYFEEFG (128 aa). The interval 229 to 263 is gamma; it reads SQLSSNKKGIIHLEVATYFEEFGKNDKAAKKEDEN.

It belongs to the FtsQ/DivIB family. DivIB subfamily. As to quaternary structure, interacts with FtsL, DivIC and PBP-2B.

The protein resides in the cell membrane. Functionally, cell division protein that may be involved in stabilizing or promoting the assembly of the division complex. Plays an essential role in division at high temperatures, maybe by protecting FtsL from degradation or by promoting formation of the FtsL-DivIC complex. May modulate the transpeptidase activity of PBP-2B. Also required for efficient sporulation at all temperatures. Could be directly involved in the engulfment process or be required to form a sporulation septum competent for engulfment. Influences the Spo0J/Soj system of chromosome segregation. The chain is Cell division protein DivIB from Bacillus subtilis (strain 168).